The sequence spans 490 residues: Patellin-3 (490 aa).

The segment covering 1–17 has biased composition (low complexity); that stretch reads MAEEPTTTTLVTPEKLP. The segment at 1-121 is disordered; it reads MAEEPTTTTL…ESSKLSDLSN (121 aa). The residue at position 2 (A2) is an N-acetylalanine. Polar residues predominate over residues 19–33; that stretch reads PSLTPSEVSESTQDA. Positions 46 to 56 are enriched in low complexity; the sequence is ETNPPETADTT. 2 stretches are compositionally biased toward basic and acidic residues: residues 57-69 and 79-100; these read TKPEEETAAEHHP and STEKQEVKDEASQKEVAEEKKS. The residue at position 108 (S108) is a Phosphoserine. The span at 109–121 shows a compositional bias: basic and acidic residues; sequence FKEESSKLSDLSN. Residue K193 forms a Glycyl lysine isopeptide (Lys-Gly) (interchain with G-Cter in ubiquitin) linkage. Positions 202 to 377 constitute a CRAL-TRIO domain; the sequence is EEDLVDDLDK…QYGGLSVDPC (176 aa). The 135-residue stretch at 353–487 folds into the GOLD domain; it reads AETLFKYISP…KKKLVYRFNV (135 aa).

It belongs to the patellin family.

The protein localises to the membrane. It is found in the cytoplasm. In terms of biological role, carrier protein that may be involved in membrane-trafficking events associated with cell plate formation during cytokinesis. Binds to some hydrophobic molecules such as phosphoinositides and promotes their transfer between the different cellular sites. The chain is Patellin-3 (PATL3) from Arabidopsis thaliana (Mouse-ear cress).